The sequence spans 215 residues: 3-isopropylmalate dehydratase small subunit (215 aa).

It belongs to the LeuD family. LeuD type 1 subfamily. As to quaternary structure, heterodimer of LeuC and LeuD.

The enzyme catalyses (2R,3S)-3-isopropylmalate = (2S)-2-isopropylmalate. It functions in the pathway amino-acid biosynthesis; L-leucine biosynthesis; L-leucine from 3-methyl-2-oxobutanoate: step 2/4. Functionally, catalyzes the isomerization between 2-isopropylmalate and 3-isopropylmalate, via the formation of 2-isopropylmaleate. In Xylella fastidiosa (strain M12), this protein is 3-isopropylmalate dehydratase small subunit.